Reading from the N-terminus, the 638-residue chain is uncharacterized protein (638 aa).

Positions 1-31 (MKFIKFNDSTIDSFLFMMLTDLAKTLTKSEA) are cleaved as a signal peptide. Composition is skewed to basic and acidic residues over residues 247 to 256 (EEKKAPKLSD), 273 to 284 (EEMPTWHRETEA), 301 to 310 (DLGKDASREG), and 329 to 342 (RKDYSKLEALESQK). 2 disordered regions span residues 247–285 (EEKKAPKLSDDITLPKQSDGDEDIHEEEMPTWHRETEAP) and 301–354 (DLGK…ADGK). A VWFA domain is found at 445–632 (FTLLVDCSAS…DVLYPLLKKL (188 aa)).

This is an uncharacterized protein from Bacillus subtilis (strain 168).